The sequence spans 91 residues: MKTLLLTLVVVTIVCLDLGYTRICHKSSFISETCPDGQNLCYLKSWCDIFCGSRGERLEFGCAATCPEVKPGVNIECCSTDNCNPHPKLRP.

Positions 1–21 (MKTLLLTLVVVTIVCLDLGYT) are cleaved as a signal peptide. 5 disulfides stabilise this stretch: C24/C41, C34/C62, C47/C51, C66/C77, and C78/C83.

This sequence belongs to the three-finger toxin family. Long-chain subfamily. Type II alpha-neurotoxin sub-subfamily. As to expression, expressed by the venom gland.

The protein resides in the secreted. Its function is as follows. Binds with high affinity to muscular (alpha-1/CHRNA1) and neuronal (alpha-7/CHRNA7) nicotinic acetylcholine receptor (nAChR) and inhibits acetylcholine from binding to the receptor, thereby impairing neuromuscular and neuronal transmission. This Ophiophagus hannah (King cobra) protein is Long neurotoxin OH-57.